Consider the following 187-residue polypeptide: Peptidyl-tRNA hydrolase (187 aa).

F14 contributes to the tRNA binding site. The active-site Proton acceptor is the H19. TRNA-binding residues include Y64, N66, and N112.

Belongs to the PTH family. As to quaternary structure, monomer.

The protein localises to the cytoplasm. It carries out the reaction an N-acyl-L-alpha-aminoacyl-tRNA + H2O = an N-acyl-L-amino acid + a tRNA + H(+). Its function is as follows. Hydrolyzes ribosome-free peptidyl-tRNAs (with 1 or more amino acids incorporated), which drop off the ribosome during protein synthesis, or as a result of ribosome stalling. Functionally, catalyzes the release of premature peptidyl moieties from peptidyl-tRNA molecules trapped in stalled 50S ribosomal subunits, and thus maintains levels of free tRNAs and 50S ribosomes. This is Peptidyl-tRNA hydrolase from Oceanobacillus iheyensis (strain DSM 14371 / CIP 107618 / JCM 11309 / KCTC 3954 / HTE831).